The chain runs to 152 residues: Nucleoside diphosphate kinase (152 aa).

6 residues coordinate ATP: lysine 11, phenylalanine 59, arginine 87, threonine 93, arginine 104, and asparagine 114. Residue histidine 117 is the Pros-phosphohistidine intermediate of the active site.

Belongs to the NDK family. In terms of assembly, homotetramer. The cofactor is Mg(2+).

It localises to the cytoplasm. The catalysed reaction is dZDP + ATP = dZTP + ADP. It catalyses the reaction a 2'-deoxyribonucleoside 5'-diphosphate + ATP = a 2'-deoxyribonucleoside 5'-triphosphate + ADP. It carries out the reaction a ribonucleoside 5'-diphosphate + ATP = a ribonucleoside 5'-triphosphate + ADP. It functions in the pathway purine metabolism. Its function is as follows. Major role in the synthesis of nucleoside triphosphates other than ATP. The ATP gamma phosphate is transferred to the NDP beta phosphate via a ping-pong mechanism, using a phosphorylated active-site intermediate. Functionally, (Microbial infection) Catalyzes the phosphorylation of dZDP to dZTP, when the bacterium is infected by a phage that produces the substrate for the synthesis of dZTP (2- amino-2'-deoxyadenosine 5'-triphosphate), which is then used by the phage as a DNA polymerase substrate. This Synechococcus sp. (strain WH7803) protein is Nucleoside diphosphate kinase.